The chain runs to 233 residues: Large ribosomal subunit protein uL1 (233 aa).

Belongs to the universal ribosomal protein uL1 family. In terms of assembly, part of the 50S ribosomal subunit.

In terms of biological role, binds directly to 23S rRNA. The L1 stalk is quite mobile in the ribosome, and is involved in E site tRNA release. Protein L1 is also a translational repressor protein, it controls the translation of the L11 operon by binding to its mRNA. In Geobacillus stearothermophilus (Bacillus stearothermophilus), this protein is Large ribosomal subunit protein uL1.